An 85-amino-acid polypeptide reads, in one-letter code: Beta-toxin BmKAs1 (85 aa).

An N-terminal signal peptide occupies residues 1 to 19 (MKIIIFLIVCSFVLIGVKA). The region spanning 20-82 (DNGYLLNKYT…LWAYETNKCN (63 aa)) is the LCN-type CS-alpha/beta domain. Disulfide bonds link Cys31/Cys81, Cys35/Cys56, Cys42/Cys63, and Cys46/Cys65.

It belongs to the long (4 C-C) scorpion toxin superfamily. Sodium channel inhibitor family. A possible sulfoxide Met-85 on BmP09 could explain the difference of function between BmK AS-1 and BmP09. Expressed by the venom gland.

The protein resides in the secreted. In terms of biological role, beta toxins bind voltage-independently at site-4 of sodium channels (Nav) and shift the voltage of activation toward more negative potentials thereby affecting sodium channel activation and promoting spontaneous and repetitive firing. BmKAs1 also significantly stimulates the binding of [3H]-ryanodine to ryanodine receptors on the sarcoplasmic reticulum of the skeletal muscle. It also displays antinociceptive effect in rat models. Functionally, toxin BmP09 (which may be post-translationally modified) specifically and reversibly blocks large conductance calcium-dependent and voltage-dependent potassium channels (BK) but has no effect on sodium channels. In Olivierus martensii (Manchurian scorpion), this protein is Beta-toxin BmKAs1.